The following is a 1235-amino-acid chain: DNA polymerase (1235 aa).

The DOD-type homing endonuclease domain maps to 773–887 (LLGYYISSGD…LILLLNSIGV (115 aa)).

This sequence belongs to the DNA polymerase type-B family. This protein undergoes a protein self splicing that involves a post-translational excision of the intervening region (intein) followed by peptide ligation.

It catalyses the reaction DNA(n) + a 2'-deoxyribonucleoside 5'-triphosphate = DNA(n+1) + diphosphate. In Pyrococcus horikoshii (strain ATCC 700860 / DSM 12428 / JCM 9974 / NBRC 100139 / OT-3), this protein is DNA polymerase (pol).